The following is a 31-amino-acid chain: Kunitz-type serine protease inhibitor RsTIQ2 (31 aa).

A BPTI/Kunitz inhibitor domain is found at 1 to 31 (EAVDFDSQCVPTADPGKCKFYFPMWNVNVFT).

Its function is as follows. Serine protease inhibitor. Inhibits trypsin, elastase, plasmin and kallikrein. This is Kunitz-type serine protease inhibitor RsTIQ2 from Rhipicephalus sanguineus (Brown dog tick).